The chain runs to 198 residues: Holliday junction branch migration complex subunit RuvA (198 aa).

Residues 1-63 (MIAYLSGAVR…EDAQLLFGFL (63 aa)) are domain I. Residues 64 to 142 (DTDSLRLFDL…EHLAAGAPVS (79 aa)) are domain II. The tract at residues 143–150 (AGKAALTS) is flexible linker. Residues 150-198 (STAGRDAIEALLALGFREPQVRSVVAELLAADPEQSADALIRKGLGKLR) form a domain III region.

The protein belongs to the RuvA family. In terms of assembly, homotetramer. Forms an RuvA(8)-RuvB(12)-Holliday junction (HJ) complex. HJ DNA is sandwiched between 2 RuvA tetramers; dsDNA enters through RuvA and exits via RuvB. An RuvB hexamer assembles on each DNA strand where it exits the tetramer. Each RuvB hexamer is contacted by two RuvA subunits (via domain III) on 2 adjacent RuvB subunits; this complex drives branch migration. In the full resolvosome a probable DNA-RuvA(4)-RuvB(12)-RuvC(2) complex forms which resolves the HJ.

It is found in the cytoplasm. In terms of biological role, the RuvA-RuvB-RuvC complex processes Holliday junction (HJ) DNA during genetic recombination and DNA repair, while the RuvA-RuvB complex plays an important role in the rescue of blocked DNA replication forks via replication fork reversal (RFR). RuvA specifically binds to HJ cruciform DNA, conferring on it an open structure. The RuvB hexamer acts as an ATP-dependent pump, pulling dsDNA into and through the RuvAB complex. HJ branch migration allows RuvC to scan DNA until it finds its consensus sequence, where it cleaves and resolves the cruciform DNA. This chain is Holliday junction branch migration complex subunit RuvA, found in Deinococcus geothermalis (strain DSM 11300 / CIP 105573 / AG-3a).